A 251-amino-acid chain; its full sequence is MLLIPAIDLKDGQCVRLKQGDMDQATIFSEDPAAMARKWVDLGARRLHLVDLNGAFAGKPKNLEAIEAILDEVGDEIPVQLGGGIRSLETIEKYLDAGLSYVIIGTAAVKDPGFLQDACTAFAGSIIVGLDAKDGKVATDGWSKLTGHEVIDLAQKFEDYGVESIVYTDIGRDGMLQGINIEATVKLAQAVGIPVIASGGLSNLVDIENLCEVEEQGVEGVICGRAIYSGDLDFAAAQKRADELNGELDNA.

D8 serves as the catalytic Proton acceptor. Catalysis depends on D131, which acts as the Proton donor.

This sequence belongs to the HisA/HisF family.

The protein localises to the cytoplasm. The catalysed reaction is 1-(5-phospho-beta-D-ribosyl)-5-[(5-phospho-beta-D-ribosylamino)methylideneamino]imidazole-4-carboxamide = 5-[(5-phospho-1-deoxy-D-ribulos-1-ylimino)methylamino]-1-(5-phospho-beta-D-ribosyl)imidazole-4-carboxamide. The protein operates within amino-acid biosynthesis; L-histidine biosynthesis; L-histidine from 5-phospho-alpha-D-ribose 1-diphosphate: step 4/9. This is 1-(5-phosphoribosyl)-5-[(5-phosphoribosylamino)methylideneamino] imidazole-4-carboxamide isomerase from Burkholderia lata (strain ATCC 17760 / DSM 23089 / LMG 22485 / NCIMB 9086 / R18194 / 383).